Here is a 1166-residue protein sequence, read N- to C-terminus: Poly [ADP-ribose] polymerase tankyrase-2 (1166 aa).

ANK repeat units follow at residues 57–89 (RKST…ARDD), 90–122 (GGLI…ARDN), and 123–155 (WNYT…IRNT). Residue Asn-203 is modified to (3S)-3-hydroxyasparagine; by HIF1AN; partial. ANK repeat units follow at residues 210 to 242 (RKST…AKDK), 243 to 275 (GDLV…AMDL), 276 to 308 (WQFT…LLNC), 363 to 398 (THET…EKTK), 399 to 431 (EFLT…ALDN), and 432 to 464 (LGQT…IISL). (3S)-3-hydroxyhistidine; by HIF1AN; partial is present on His-238. A (3S)-3-hydroxyasparagine; by HIF1AN; partial modification is found at Asn-271. Asn-427 is modified ((3S)-3-hydroxyasparagine; by HIF1AN; partial). (3S)-3-hydroxyasparagine; by HIF1AN; partial is present on Asn-518. ANK repeat units follow at residues 525-557 (RQST…AKDK), 558-590 (GGLV…VADL), and 591-623 (WKFT…KKNR). Residues 545 to 553 (LLQHGADVH) form an HIF1AN-binding region. His-553 carries the post-translational modification (3S)-3-hydroxyhistidine; by HIF1AN; partial. Asn-586 carries the post-translational modification (3S)-3-hydroxyasparagine; by HIF1AN; partial. (3S)-3-hydroxyasparagine; by HIF1AN; partial is present on residues Asn-671, Asn-706, and Asn-739. 3 ANK repeats span residues 678 to 710 (RHST…AQDK), 711 to 743 (GGLI…ATDK), and 744 to 776 (WAFT…LKNQ). The disordered stretch occupies residues 819–839 (GATADALSSGPSSPSSLSAAS). Residues 822–839 (ADALSSGPSSPSSLSAAS) are compositionally biased toward low complexity. Positions 873–936 (GVDFSITQFV…IKGVERLISG (64 aa)) constitute an SAM domain. The region spanning 959–1164 (SPDDKEFQSV…YQIMRPEGMV (206 aa)) is the PARP catalytic domain. Cys-1081, His-1084, Cys-1089, and Cys-1092 together coordinate Zn(2+).

Belongs to the ARTD/PARP family. In terms of assembly, oligomerizes and associates with TNKS. Interacts with the cytoplasmic domain of LNPEP/Otase in SLC2A4/GLUT4-vesicles. Binds to the N-terminus of Grb14 and TRF1 with its ankyrin repeat region. Interacts with HIF1AN. Interacts with RNF146; this interaction leads to ubiquitination and proteasomal degradation. Interacts with NUMA1. Ubiquitinated at 'Lys-48' and 'Lys-63' by RNF146 when auto-poly-ADP-ribosylated; this leads to degradation. Deubiquitinated by USP25; leading to stabilization. In terms of processing, ADP-ribosylated (-auto). Poly-ADP-ribosylated protein is recognized by RNF146, followed by ubiquitination. Post-translationally, the crystallographic evidence suggests that the 3-hydroxyhistidine may be the (3S) stereoisomer. As to expression, highly expressed in placenta, skeletal muscle, liver, brain, kidney, heart, thymus, spinal cord, lung, peripheral blood leukocytes, pancreas, lymph nodes, spleen, prostate, testis, ovary, small intestine, colon, mammary gland, breast and breast carcinoma, and in common-type meningioma. Highly expressed in fetal liver, heart and brain.

The protein resides in the cytoplasm. It localises to the golgi apparatus membrane. The protein localises to the nucleus. It is found in the chromosome. Its subcellular location is the telomere. It catalyses the reaction NAD(+) + (ADP-D-ribosyl)n-acceptor = nicotinamide + (ADP-D-ribosyl)n+1-acceptor + H(+).. It carries out the reaction L-aspartyl-[protein] + NAD(+) = 4-O-(ADP-D-ribosyl)-L-aspartyl-[protein] + nicotinamide. The enzyme catalyses L-glutamyl-[protein] + NAD(+) = 5-O-(ADP-D-ribosyl)-L-glutamyl-[protein] + nicotinamide. Specifically inhibited by XAV939, a small molecule, leading to inhibit the Wnt signaling pathway by stabilizing AXIN1 and AXIN2. Inhibited by talazoparib. Functionally, poly-ADP-ribosyltransferase involved in various processes such as Wnt signaling pathway, telomere length and vesicle trafficking. Acts as an activator of the Wnt signaling pathway by mediating poly-ADP-ribosylation of AXIN1 and AXIN2, 2 key components of the beta-catenin destruction complex: poly-ADP-ribosylated target proteins are recognized by RNF146, which mediates their ubiquitination and subsequent degradation. Also mediates poly-ADP-ribosylation of BLZF1 and CASC3, followed by recruitment of RNF146 and subsequent ubiquitination. Mediates poly-ADP-ribosylation of TERF1, thereby contributing to the regulation of telomere length. Stimulates 26S proteasome activity. The protein is Poly [ADP-ribose] polymerase tankyrase-2 of Homo sapiens (Human).